The following is a 231-amino-acid chain: Albumin-2 (231 aa).

Hemopexin repeat units follow at residues 4 to 55 (TGYI…FKSL), 62 to 112 (SYGV…FPFF), 118 to 166 (ENGI…FPCF), and 172 to 223 (ESGT…WPSL). Ca(2+) is bound by residues N8, D66, D122, and D176.

Monomer and homodimer.

The protein resides in the cytoplasm. It localises to the cytosol. Functionally, may play a role in response to oxidative stress and polyamine biosynthesis. The polypeptide is Albumin-2 (Pisum sativum (Garden pea)).